Consider the following 281-residue polypeptide: Acyl-[acyl-carrier-protein]--UDP-N-acetylglucosamine O-acyltransferase (281 aa).

This sequence belongs to the transferase hexapeptide repeat family. LpxA subfamily. In terms of assembly, homotrimer.

It localises to the cytoplasm. It catalyses the reaction a (3R)-hydroxyacyl-[ACP] + UDP-N-acetyl-alpha-D-glucosamine = a UDP-3-O-[(3R)-3-hydroxyacyl]-N-acetyl-alpha-D-glucosamine + holo-[ACP]. It participates in glycolipid biosynthesis; lipid IV(A) biosynthesis; lipid IV(A) from (3R)-3-hydroxytetradecanoyl-[acyl-carrier-protein] and UDP-N-acetyl-alpha-D-glucosamine: step 1/6. Involved in the biosynthesis of lipid A, a phosphorylated glycolipid that anchors the lipopolysaccharide to the outer membrane of the cell. In Rickettsia bellii (strain OSU 85-389), this protein is Acyl-[acyl-carrier-protein]--UDP-N-acetylglucosamine O-acyltransferase.